The primary structure comprises 384 residues: Lipid-A-disaccharide synthase (384 aa).

Belongs to the LpxB family.

It catalyses the reaction a lipid X + a UDP-2-N,3-O-bis[(3R)-3-hydroxyacyl]-alpha-D-glucosamine = a lipid A disaccharide + UDP + H(+). Its pathway is bacterial outer membrane biogenesis; LPS lipid A biosynthesis. Its function is as follows. Condensation of UDP-2,3-diacylglucosamine and 2,3-diacylglucosamine-1-phosphate to form lipid A disaccharide, a precursor of lipid A, a phosphorylated glycolipid that anchors the lipopolysaccharide to the outer membrane of the cell. This Geobacter sulfurreducens (strain ATCC 51573 / DSM 12127 / PCA) protein is Lipid-A-disaccharide synthase.